The chain runs to 209 residues: Large ribosomal subunit protein uL3 (209 aa).

Residues 112-122 (GTTRGHGTQGN) are compositionally biased toward polar residues. The segment at 112–146 (GTTRGHGTQGNIKRWGQSRGPETHGSRYHRIPGSM) is disordered.

Belongs to the universal ribosomal protein uL3 family. In terms of assembly, part of the 50S ribosomal subunit. Forms a cluster with proteins L14 and L19.

One of the primary rRNA binding proteins, it binds directly near the 3'-end of the 23S rRNA, where it nucleates assembly of the 50S subunit. The chain is Large ribosomal subunit protein uL3 from Lactobacillus johnsonii (strain CNCM I-12250 / La1 / NCC 533).